The sequence spans 222 residues: MSDEKNKFTDASFENCDLKNPADRNTLKQAADEFLKTHKTEAREDVEEESKEVDPLASLQDENKELKNQLLRLAADMENLRRRTARDVADARAYSIANFARDMLSVSDNLNRALEAIPEGARESDAGLKSLAEGVEMTERAMMAALERHGVQKIHPEGQKFDPHFHQAMFEIPNADVPDNTVQQVVQAGYIIGERVLRPAIVGVAKGGTKEASIETDKASHQ.

The segment at 1–21 (MSDEKNKFTDASFENCDLKNP) is disordered.

This sequence belongs to the GrpE family. Homodimer.

The protein resides in the cytoplasm. In terms of biological role, participates actively in the response to hyperosmotic and heat shock by preventing the aggregation of stress-denatured proteins, in association with DnaK and GrpE. It is the nucleotide exchange factor for DnaK and may function as a thermosensor. Unfolded proteins bind initially to DnaJ; upon interaction with the DnaJ-bound protein, DnaK hydrolyzes its bound ATP, resulting in the formation of a stable complex. GrpE releases ADP from DnaK; ATP binding to DnaK triggers the release of the substrate protein, thus completing the reaction cycle. Several rounds of ATP-dependent interactions between DnaJ, DnaK and GrpE are required for fully efficient folding. The sequence is that of Protein GrpE from Bartonella tribocorum (strain CIP 105476 / IBS 506).